We begin with the raw amino-acid sequence, 549 residues long: Cytoplasmic trehalase (549 aa).

Residues R168, 175 to 176 (WD), N212, 221 to 223 (RSQ), 292 to 294 (RDE), and G324 contribute to the substrate site. Catalysis depends on proton donor/acceptor residues D326 and E509. Residue E525 participates in substrate binding.

It belongs to the glycosyl hydrolase 37 family. Monomer.

Its subcellular location is the cytoplasm. The catalysed reaction is alpha,alpha-trehalose + H2O = alpha-D-glucose + beta-D-glucose. The protein operates within glycan degradation; trehalose degradation; D-glucose from alpha,alpha-trehalose: step 1/1. Its function is as follows. Hydrolyzes trehalose to glucose. Could be involved, in cells returning to low osmolarity conditions, in the utilization of the accumulated cytoplasmic trehalose, which was synthesized in response to high osmolarity. The chain is Cytoplasmic trehalase from Salmonella schwarzengrund (strain CVM19633).